A 233-amino-acid chain; its full sequence is Biosynthetic peptidoglycan transglycosylase (233 aa).

Residues 8–28 (LIALPVGIFIFFNAYVYGNII) traverse the membrane as a helical segment.

It belongs to the glycosyltransferase 51 family.

The protein localises to the cell inner membrane. It catalyses the reaction [GlcNAc-(1-&gt;4)-Mur2Ac(oyl-L-Ala-gamma-D-Glu-L-Lys-D-Ala-D-Ala)](n)-di-trans,octa-cis-undecaprenyl diphosphate + beta-D-GlcNAc-(1-&gt;4)-Mur2Ac(oyl-L-Ala-gamma-D-Glu-L-Lys-D-Ala-D-Ala)-di-trans,octa-cis-undecaprenyl diphosphate = [GlcNAc-(1-&gt;4)-Mur2Ac(oyl-L-Ala-gamma-D-Glu-L-Lys-D-Ala-D-Ala)](n+1)-di-trans,octa-cis-undecaprenyl diphosphate + di-trans,octa-cis-undecaprenyl diphosphate + H(+). The protein operates within cell wall biogenesis; peptidoglycan biosynthesis. Functionally, peptidoglycan polymerase that catalyzes glycan chain elongation from lipid-linked precursors. This chain is Biosynthetic peptidoglycan transglycosylase, found in Neisseria meningitidis serogroup C (strain 053442).